The chain runs to 566 residues: MVEGDSYVETLDSMIELFKDYKPGSITLENITRLCQTLGLESFTEELSNELSRLSTASKIIVIDVDYNKKQDRIQDVKLVLASNFDNFDYFNQRDGEHEKSNILLNSLTKYPDLKAFHNNLKFLYLLDAYSHIESDSTSHNNGSSDKSLDSSNASFNNQGKLDLFKYFTELSHYIRQCFQDNCCDFKVRTNLNDKFGIYILTQGINGKEVPLAKIYLEENKSDSQYRFYEYIYSQETKSWINESAENFSNGISLVMEIVANAKESNYTDLIWFPEDFISPELIIDKVTCSSNSSSSPPIIDLFSNNNYNSRIQLMNDFTTKLINIKKFDISNDNLDLISEILKWVQWSRIVLQNVFKLVSTPSSNSNSSELEPDYQAPFSTSTKDKNSSTSNTEPIPRSNRHGSVVEASRRRRSSTNKSKRPSITEAMMLKEEGLQQFNLHEILSEPAIEEENGDSIKEHSTTMDGANDLGFTASVSNQENAGTDIVMEDHGVLQGTSQNYGTATADDADIEMKDVSSKPSKPESSVLQLIVSEDHIILDTISECNLYDDVKCWSKFIEKFQDIVS.

Residue serine 155 is modified to Phosphoserine. The interval 361–425 is disordered; sequence TPSSNSNSSE…TNKSKRPSIT (65 aa). Positions 410 to 421 are enriched in basic residues; that stretch reads RRRRSSTNKSKR. Position 423 is a phosphoserine (serine 423).

The protein belongs to the Mediator complex subunit 1 family. Component of the Mediator complex, which is composed of at least 21 subunits that form three structurally distinct submodules. The Mediator head module contains MED6, MED8, MED11, SRB4/MED17, SRB5/MED18, ROX3/MED19, SRB2/MED20 and SRB6/MED22, the middle module contains MED1, MED4, NUT1/MED5, MED7, CSE2/MED9, NUT2/MED10, SRB7/MED21 and SOH1/MED31, and the tail module contains MED2, PGD1/MED3, RGR1/MED14, GAL11/MED15 and SIN4/MED16. The head and the middle modules interact directly with RNA polymerase II, whereas the elongated tail module interacts with gene-specific regulatory proteins. MED1 interacts directly with MED4 and MED7.

The protein resides in the nucleus. Functionally, component of the Mediator complex, a coactivator involved in the regulated transcription of nearly all RNA polymerase II-dependent genes. Mediator functions as a bridge to convey information from gene-specific regulatory proteins to the basal RNA polymerase II transcription machinery. The Mediator complex, having a compact conformation in its free form, is recruited to promoters by direct interactions with regulatory proteins and serves for the assembly of a functional preinitiation complex with RNA polymerase II and the general transcription factors. The Mediator complex unfolds to an extended conformation and partially surrounds RNA polymerase II, specifically interacting with the unphosphorylated form of the C-terminal domain (CTD) of RNA polymerase II. The Mediator complex dissociates from the RNA polymerase II holoenzyme and stays at the promoter when transcriptional elongation begins. The sequence is that of Mediator of RNA polymerase II transcription subunit 1 (MED1) from Saccharomyces cerevisiae (strain ATCC 204508 / S288c) (Baker's yeast).